Here is a 429-residue protein sequence, read N- to C-terminus: Keratin, type I cytoskeletal 20 (429 aa).

Residues 1–26 (MDFSRRSFHRSLSSSSQGPALSTSGS) form a disordered region. The segment at 1–74 (MDFSRRSFHR…SNGGDLFGGN (74 aa)) is head. Over residues 10 to 26 (RSLSSSSQGPALSTSGS) the composition is skewed to low complexity. Phosphoserine occurs at positions 13, 16, and 26. The interval 75–110 (EKLAMQNLNDRLASYLEKVRSLEQSNSKLEAQIKQW) is coil 1A. Residues 75–386 (EKLAMQNLND…RLLEGEDIKT (312 aa)) form the IF rod domain. Residues 111–128 (YETNAPSTIRDYSSYYAQ) are linker 1. Positions 129 to 220 (IKELQDQIKD…KEHQEEVEVL (92 aa)) are coil 1B. Positions 221-243 (RRQLGNNVNVEVDAAPGLNLGEI) are linker 12. Positions 244-382 (MNEMRQKYEI…ATYRRLLEGE (139 aa)) are coil 2. Residues 383-429 (DIKTTEYQLNTLEAKDIKKTRKIKTVVEEVVDGKVVSSEVKEIEENI) are tail.

It belongs to the intermediate filament family. Heterotetramer of two type I and two type II keratins. Associates with KRT8. Post-translationally, hyperphosphorylation at Ser-13 occurs during the early stages of apoptosis but becomes less prominent during the later stages. Phosphorylation at Ser-13 also increases in response to stress brought on by cell injury. In terms of processing, proteolytically cleaved by caspases during apoptosis. Cleavage occurs at Asp-233. In terms of tissue distribution, expressed predominantly in the intestinal epithelium in differentiated villus cells.

Functionally, plays a significant role in maintaining keratin filament organization in intestinal epithelia. When phosphorylated, plays a role in the secretion of mucin in the small intestine. This is Keratin, type I cytoskeletal 20 (Krt20) from Rattus norvegicus (Rat).